The chain runs to 442 residues: Chromosomal replication initiator protein DnaA (442 aa).

The domain I, interacts with DnaA modulators stretch occupies residues 1 to 68 (MDAWPRCLER…ELLAYFVGNG (68 aa)). The tract at residues 68-104 (GDVALAVGSRPRAPEPAPAPVAVPSAPQAAPIVPFAG) is domain II. The segment at 105-322 (NLDSHYTFAN…GALNTLVARA (218 aa)) is domain III, AAA+ region. The ATP site is built by G150, G152, K153, and T154. Residues 323 to 442 (NFTGRSITVE…WEKLIRKLSE (120 aa)) form a domain IV, binds dsDNA region.

This sequence belongs to the DnaA family. In terms of assembly, oligomerizes as a right-handed, spiral filament on DNA at oriC.

The protein resides in the cytoplasm. Plays an essential role in the initiation and regulation of chromosomal replication. ATP-DnaA binds to the origin of replication (oriC) to initiate formation of the DNA replication initiation complex once per cell cycle. Binds the DnaA box (a 9 base pair repeat at the origin) and separates the double-stranded (ds)DNA. Forms a right-handed helical filament on oriC DNA; dsDNA binds to the exterior of the filament while single-stranded (ss)DNA is stabiized in the filament's interior. The ATP-DnaA-oriC complex binds and stabilizes one strand of the AT-rich DNA unwinding element (DUE), permitting loading of DNA polymerase. After initiation quickly degrades to an ADP-DnaA complex that is not apt for DNA replication. Binds acidic phospholipids. The protein is Chromosomal replication initiator protein DnaA of Xanthomonas axonopodis pv. citri (strain 306).